The sequence spans 108 residues: NADH dehydrogenase [ubiquinone] 1 alpha subcomplex subunit 8-A (108 aa).

2 CHCH domains span residues 28-69 (GIRC…LKDL) and 70-108 (HQRCPKEMDAYVGCMYYYTNEFELCRKEQEAFEKVCPLK). 3 short sequence motifs (cx9C motif) span residues 31–41 (CMPENMAFLKC), 51–61 (CLEKGRDVTRC), and 73–83 (CPKEMDAYVGC). Cystine bridges form between Cys31-Cys61, Cys41-Cys51, Cys73-Cys105, and Cys83-Cys94. The short motif at 94–105 (CRKEQEAFEKVC) is the Cx10C motif element.

Belongs to the complex I NDUFA8 subunit family. In terms of assembly, complex I is composed of at least 49 different subunits.

It is found in the mitochondrion. The protein resides in the mitochondrion intermembrane space. In terms of biological role, accessory subunit of the mitochondrial membrane respiratory chain NADH dehydrogenase (Complex I), that is believed not to be involved in catalysis. Complex I functions in the transfer of electrons from NADH to the respiratory chain. The immediate electron acceptor for the enzyme is believed to be ubiquinone. In Arabidopsis thaliana (Mouse-ear cress), this protein is NADH dehydrogenase [ubiquinone] 1 alpha subcomplex subunit 8-A.